Reading from the N-terminus, the 878-residue chain is Protein argonaute 6 (878 aa).

Residues 1-17 show a composition bias toward low complexity; the sequence is METSSSLPLSPISIEPE. The disordered stretch occupies residues 1 to 25; the sequence is METSSSLPLSPISIEPEQPSHRDYD. One can recognise a PAZ domain in the interval 259–372; the sequence is PVIEFLKANQ…LPLEFCNLVS (114 aa). The Piwi domain occupies 541–851; the sequence is FILCILPERK…AAAQVAQFTK (311 aa).

Belongs to the argonaute family. Ago subfamily. In terms of tissue distribution, expressed in roots, cotyledons and shoot meristematic region.

It is found in the nucleus. Involved in transcriptional gene silencing (TGS). Component of the RISC complex that associate with the small interfering RNA (siRNA) pathway involved in direct cytosine methylation at endogenous DNA repeats. Required for the accumulation of specific siRNAs derived from transgene and heterochromatin-related endogenous loci. Involved in RNA-directed DNA methylation (RdDM) at specific endogenous loci. Probably not required for the accumulation of siRNAs derived from transgene inverted repeats that induce post-transcriptional gene silencing (PTGS). Associates mainly with small RNAs of 24 nucleotide in length and preferentially recruits small RNAs with a 5' terminal adenosine. Targeted by turnip yellows virus (TuYV) protein P0 (via F-box-like domain) for probable proteasome degradation and thereby inactivating AGO6 function in RNA silencing. The sequence is that of Protein argonaute 6 (AGO6) from Arabidopsis thaliana (Mouse-ear cress).